The following is a 475-amino-acid chain: UDP-glycosyltransferase 84A4 (475 aa).

Catalysis depends on histidine 20, which acts as the Proton acceptor. Histidine 20 is an an anthocyanidin binding site. UDP-alpha-D-glucose-binding residues include glutamine 342, histidine 357, tryptophan 360, asparagine 361, serine 362, and glutamate 365. Glycine 380 serves as a coordination point for an anthocyanidin. UDP-alpha-D-glucose-binding residues include aspartate 381 and glutamine 382.

This sequence belongs to the UDP-glycosyltransferase family.

It carries out the reaction (E)-4-coumarate + UDP-alpha-D-glucose = 4-O-(beta-D-glucosyl)-trans-4-coumarate + UDP + H(+). The catalysed reaction is (E)-ferulate + UDP-alpha-D-glucose = 1-O-[(E)-feruloyl]-beta-D-glucose + UDP. The enzyme catalyses (E)-caffeate + UDP-alpha-D-glucose = 1-O-[(E)-caffeoyl]-beta-D-glucose + UDP. It catalyses the reaction (E)-sinapate + UDP-alpha-D-glucose = 1-O-(trans-sinapoyl)-beta-D-glucose + UDP. It carries out the reaction (E)-cinnamate + UDP-alpha-D-glucose = 1-O-(trans-cinnamoyl)-beta-D-glucose + UDP. In terms of biological role, UDP-glucosyltransferase that forms glucose esters with phenylpropanoids. Glucosylates 4-coumarate, ferulate, caffeate, sinapate and cinnamate. This Arabidopsis thaliana (Mouse-ear cress) protein is UDP-glycosyltransferase 84A4.